The following is a 215-amino-acid chain: Pyrrolidone-carboxylate peptidase (215 aa).

Catalysis depends on residues E80, C143, and H167.

The protein belongs to the peptidase C15 family. As to quaternary structure, homotetramer.

The protein resides in the cytoplasm. The enzyme catalyses Release of an N-terminal pyroglutamyl group from a polypeptide, the second amino acid generally not being Pro.. Functionally, removes 5-oxoproline from various penultimate amino acid residues except L-proline. This chain is Pyrrolidone-carboxylate peptidase, found in Bacillus cereus (strain ATCC 14579 / DSM 31 / CCUG 7414 / JCM 2152 / NBRC 15305 / NCIMB 9373 / NCTC 2599 / NRRL B-3711).